The chain runs to 513 residues: MAVSPTTMAAVRASGAVPNAEYLLSAEGVRKEFPGVVALDDVQFRLKRASVHALMGENGAGKSTLMKILAGIYTPDKGDIRLKGIEIQLKSPLDALENGIAMIHQELNLMPFMTVAENIWIRREPKNRLGFIDHGVMHRMTEELFTRLNIAIDPDIEVRFLSVANRQMVEIAKAVSYNSDVLIMDEPTSALTEREVEHLFRIIRDLKAQGIGIVYITHKMNELFEIADEFSVFRDGRYIGTHASTDVTRDDIIRMMVGREITQMFPKEEVPIGEVMLSVKDLCLNGVFKNVSFEVRAGEILGVAGLVGSGRSNVAETLFGVTPASSGSIELYGKPVAISSPTEAIRNRMAFLTEDRKDTGCLLILDILENMQIAVLQDRYVKGGFVQQGAVEATCEDMAKKLRVKTPNLYERVENLSGGNQQKVLIGRWLLTNPRILILDEPTRGIDVGAKAEIHRLVTEMARDGVAVVMISSEMPEVLGMSDRIMVMHEGRVTGFLNRDEATQIKVMELAAQ.

ABC transporter domains are found at residues 24–260 (LSAE…VGRE) and 270–510 (VPIG…VMEL). 56-63 (GENGAGKS) serves as a coordination point for ATP.

This sequence belongs to the ABC transporter superfamily. Carbohydrate importer 2 (CUT2) (TC 3.A.1.2) family.

It localises to the cell inner membrane. It carries out the reaction D-ribose(out) + ATP + H2O = D-ribose(in) + ADP + phosphate + H(+). The enzyme catalyses D-galactose(out) + ATP + H2O = D-galactose(in) + ADP + phosphate + H(+). In terms of biological role, part of an ABC transporter complex involved in carbohydrate import. Could be involved in ribose, galactose and/or methyl galactoside import. Responsible for energy coupling to the transport system. This is Putative ribose/galactose/methyl galactoside import ATP-binding protein from Rhizobium johnstonii (strain DSM 114642 / LMG 32736 / 3841) (Rhizobium leguminosarum bv. viciae).